Here is a 100-residue protein sequence, read N- to C-terminus: Large ribosomal subunit protein uL23 (100 aa).

Belongs to the universal ribosomal protein uL23 family. Part of the 50S ribosomal subunit. Contacts protein L29, and trigger factor when it is bound to the ribosome.

In terms of biological role, one of the early assembly proteins it binds 23S rRNA. One of the proteins that surrounds the polypeptide exit tunnel on the outside of the ribosome. Forms the main docking site for trigger factor binding to the ribosome. In Xylella fastidiosa (strain M23), this protein is Large ribosomal subunit protein uL23.